Here is a 171-residue protein sequence, read N- to C-terminus: S-ribosylhomocysteine lyase (171 aa).

Residues histidine 54, histidine 58, and cysteine 128 each contribute to the Fe cation site.

Belongs to the LuxS family. Homodimer. Fe cation is required as a cofactor.

It carries out the reaction S-(5-deoxy-D-ribos-5-yl)-L-homocysteine = (S)-4,5-dihydroxypentane-2,3-dione + L-homocysteine. Involved in the synthesis of autoinducer 2 (AI-2) which is secreted by bacteria and is used to communicate both the cell density and the metabolic potential of the environment. The regulation of gene expression in response to changes in cell density is called quorum sensing. Catalyzes the transformation of S-ribosylhomocysteine (RHC) to homocysteine (HC) and 4,5-dihydroxy-2,3-pentadione (DPD). The polypeptide is S-ribosylhomocysteine lyase (Salmonella arizonae (strain ATCC BAA-731 / CDC346-86 / RSK2980)).